The chain runs to 89 residues: Putative defensin-like protein 254 (89 aa).

An N-terminal signal peptide occupies residues 1–20; it reads MHNISFKLLLLCDLFLSSSS. Cystine bridges form between C31/C48 and C37/C55.

It belongs to the DEFL family.

Its subcellular location is the secreted. This chain is Putative defensin-like protein 254, found in Arabidopsis thaliana (Mouse-ear cress).